The chain runs to 383 residues: Interleukin-13 receptor subunit alpha-2 (383 aa).

The N-terminal stretch at 1-21 (MAFVHIRCLCFILLCTITGYS) is a signal peptide. Residues 22 to 334 (LEIKVNPPQD…WEGYTGPDSK (313 aa)) lie on the Extracellular side of the membrane. 3 Fibronectin type-III domains span residues 28-128 (PPQD…SDEG), 131-219 (ETKI…PIRS), and 234-332 (PPEF…TGPD). Cys59 and Cys107 are disulfide-bonded. Residue Asn109 is glycosylated (N-linked (GlcNAc...) asparagine). The cysteines at positions 139 and 149 are disulfide-linked. Asn162 carries N-linked (GlcNAc...) asparagine glycosylation. A disulfide bridge links Cys178 with Cys191. N-linked (GlcNAc...) asparagine glycans are attached at residues Asn209 and Asn293. Cys263 and Cys310 are oxidised to a cystine. The short motif at 316–320 (WSEWS) is the WSXWS motif element. A helical membrane pass occupies residues 335–355 (IIFIVPVCLFFIFLLLLLCLI). Residues 356–383 (VEKEEPEPTLSLHVDLNKEVCAYEDTLC) lie on the Cytoplasmic side of the membrane.

Belongs to the type I cytokine receptor family. Type 5 subfamily. In terms of assembly, interacts with IL4RA. Interacts with high affinity to interleukin-13 (IL13), but not to interleukin-4 (IL4). Cleaved by MMP8 leading to a soluble form that is also able to interact with IL13.

It is found in the cell membrane. The protein localises to the secreted. Cell surface receptor that plays a role in the regulation of IL-13-mediated responses. Functions as a decoy receptor that inhibits IL-13- and IL-4-mediated signal transduction via the JAK-STAT pathway and thereby modulates immune responses and inflammation. Serves as a functional signaling receptor for IL-13 in an alternative pathway involving AP-1 ultimately leading to the production of TGFB1. The chain is Interleukin-13 receptor subunit alpha-2 (Il13ra2) from Mus musculus (Mouse).